A 139-amino-acid chain; its full sequence is Dehydrin DHN1 (139 aa).

Residues 1–139 are disordered; the sequence is MEYQGQHGHA…IKEKLPGGQH (139 aa). A compositionally biased stretch (gly residues) spans 23–42; the sequence is GHGGFTGGPTGTHGAAGVGG. A compositionally biased stretch (basic and acidic residues) spans 49-58; sequence RDGHKTDGVL. The span at 59–68 shows a compositional bias: low complexity; the sequence is RRSGSSSSSS. Over residues 83–98 the composition is skewed to basic and acidic residues; that stretch reads KEKIKEKLPGGAHKDA. Residues 99–109 are compositionally biased toward low complexity; that stretch reads AGQQQQTAMAG. Basic and acidic residues predominate over residues 120 to 139; the sequence is TGEKKGVMDKIKEKLPGGQH.

It belongs to the plant dehydrin family.

In Hordeum vulgare (Barley), this protein is Dehydrin DHN1 (DHN1).